A 363-amino-acid polypeptide reads, in one-letter code: Pyrimidine monooxygenase RutA (363 aa).

Residues 49–50 (IK), Asn-115, Glu-124, 140–141 (RY), and Ser-190 contribute to the FMN site.

This sequence belongs to the NtaA/SnaA/DszA monooxygenase family. RutA subfamily.

It catalyses the reaction uracil + FMNH2 + NADH + O2 = (Z)-3-ureidoacrylate + FMN + NAD(+) + H2O + H(+). The enzyme catalyses thymine + FMNH2 + NADH + O2 = (Z)-2-methylureidoacrylate + FMN + NAD(+) + H2O + H(+). In terms of biological role, catalyzes the pyrimidine ring opening between N-3 and C-4 by an unusual flavin hydroperoxide-catalyzed mechanism, adding oxygen atoms in the process to yield ureidoacrylate peracid, that immediately reacts with FMN forming ureidoacrylate and FMN-N(5)-oxide. The FMN-N(5)-oxide reacts spontaneously with NADH to produce FMN. Requires the flavin reductase RutF to regenerate FMN in vivo. This chain is Pyrimidine monooxygenase RutA, found in Pantoea ananatis (strain LMG 20103).